Consider the following 77-residue polypeptide: Defensin-like protein 159 (77 aa).

A signal peptide spans 1-27 (MAKLSCSYFLVLILVFSAFLMVERAEG). 4 disulfides stabilise this stretch: cysteine 30/cysteine 77, cysteine 40/cysteine 59, cysteine 45/cysteine 71, and cysteine 49/cysteine 73.

It belongs to the DEFL family.

It localises to the secreted. This Arabidopsis thaliana (Mouse-ear cress) protein is Defensin-like protein 159 (LCR25).